Reading from the N-terminus, the 321-residue chain is uncharacterized protein (321 aa).

The residue at position 2 (valine 2) is an N-acetylvaline. Residues 37-63 (SEASRLLTPQTSSNHALSKMQKDDDIR) form a disordered region. The span at 43 to 52 (LTPQTSSNHA) shows a compositional bias: polar residues. Threonine 44 carries the phosphothreonine modification. A phosphoserine mark is found at serine 49, serine 69, serine 121, serine 126, serine 129, serine 137, and serine 139. Disordered stretches follow at residues 115–270 (KKQR…YSIS) and 283–321 (ETLEEEQEDAEKEGVLMEDEGNEEYTKDLEEAANKAQPQ). 3 stretches are compositionally biased toward polar residues: residues 120–145 (KSINSESFSSPSLRASKSNSLITSTD), 153–162 (KYSSSGTPEN), and 178–189 (SYGQMIKNNSNR). Position 159 is a phosphothreonine (threonine 159). Residues 204–229 (EIDHTAPEKSEKRQERSGRSFDRQKS) show a composition bias toward basic and acidic residues. Residues 237–253 (LSRSISRGPTKNKTVSP) are compositionally biased toward polar residues. A phosphoserine mark is found at serine 238, serine 240, serine 242, and serine 270. A compositionally biased stretch (acidic residues) spans 284–305 (TLEEEQEDAEKEGVLMEDEGNE). A compositionally biased stretch (basic and acidic residues) spans 306–315 (EYTKDLEEAA).

The protein resides in the cytoplasm. This is an uncharacterized protein from Saccharomyces cerevisiae (strain ATCC 204508 / S288c) (Baker's yeast).